A 250-amino-acid polypeptide reads, in one-letter code: Probable replication-associated protein repA2 (250 aa).

It belongs to the IncFII RepA family.

In terms of biological role, this protein is essential for plasmid replication; it is involved in copy control functions. The protein is Probable replication-associated protein repA2 (repA2) of Buchnera aphidicola subsp. Schizaphis graminum (strain Sg).